The primary structure comprises 435 residues: Ribulose bisphosphate carboxylase-like protein (435 aa).

The Mg(2+) site is built by lysine 198, aspartate 200, and glutamate 201. N6-carboxylysine is present on lysine 198.

This sequence belongs to the RuBisCO large chain family. Type IV subfamily. In terms of assembly, homodimer. The cofactor is Mg(2+).

Functionally, may be involved in sulfur metabolism and oxidative stress response. Does not show RuBisCO activity. In Chlorobaculum tepidum (strain ATCC 49652 / DSM 12025 / NBRC 103806 / TLS) (Chlorobium tepidum), this protein is Ribulose bisphosphate carboxylase-like protein.